A 159-amino-acid polypeptide reads, in one-letter code: 3-hydroxyacyl-[acyl-carrier-protein] dehydratase FabZ (159 aa).

H58 is a catalytic residue.

Belongs to the thioester dehydratase family. FabZ subfamily.

It is found in the cytoplasm. It carries out the reaction a (3R)-hydroxyacyl-[ACP] = a (2E)-enoyl-[ACP] + H2O. Functionally, involved in unsaturated fatty acids biosynthesis. Catalyzes the dehydration of short chain beta-hydroxyacyl-ACPs and long chain saturated and unsaturated beta-hydroxyacyl-ACPs. The chain is 3-hydroxyacyl-[acyl-carrier-protein] dehydratase FabZ from Helicobacter pylori (strain HPAG1).